The primary structure comprises 132 residues: Small ribosomal subunit protein uS8c (132 aa).

Belongs to the universal ribosomal protein uS8 family. As to quaternary structure, part of the 30S ribosomal subunit.

It localises to the plastid. Its subcellular location is the chloroplast. Functionally, one of the primary rRNA binding proteins, it binds directly to 16S rRNA central domain where it helps coordinate assembly of the platform of the 30S subunit. The chain is Small ribosomal subunit protein uS8c (rps8) from Adiantum capillus-veneris (Maidenhair fern).